Consider the following 346-residue polypeptide: Protein SHI RELATED SEQUENCE 5 (346 aa).

The tract at residues 7–31 (LGGRDNNSNNNKQDHHQVDKDHHHQ) is disordered. The segment covering 18-31 (KQDHHQVDKDHHHQ) has biased composition (basic and acidic residues). Zn(2+) contacts are provided by cysteine 125, cysteine 128, cysteine 136, cysteine 141, cysteine 145, and cysteine 152. Residues 125–152 (CQDCGNQAKKDCPHMRCRTCCKSRGFHC) constitute a DNA-binding region (zn(2)-C6 fungal-type; degenerate). Over residues 175 to 186 (SLQHHSASSRET) the composition is skewed to polar residues. The segment at 175-215 (SLQHHSASSRETQNAKRLREASGGDNNDDKDHSGGGGSALA) is disordered. The segment covering 187-207 (QNAKRLREASGGDNNDDKDHS) has biased composition (basic and acidic residues). The short motif at 269–272 (IGGH) is the Required for homo- and heterodimerization element.

It belongs to the SHI protein family.

It is found in the nucleus. Its function is as follows. Transcription activator that binds DNA on 5'-ACTCTAC-3' and promotes auxin homeostasis-regulating gene expression (e.g. YUC genes), as well as genes affecting stamen development, cell expansion and timing of flowering. Synergistically with other SHI-related proteins, regulates gynoecium, stamen and leaf development in a dose-dependent manner, controlling apical-basal patterning. Promotes style and stigma formation, and influences vascular development during gynoecium development. May also have a role in the formation and/or maintenance of the shoot apical meristem (SAM). The polypeptide is Protein SHI RELATED SEQUENCE 5 (SRS5) (Arabidopsis thaliana (Mouse-ear cress)).